The following is a 200-amino-acid chain: Putative 3-methyladenine DNA glycosylase (200 aa).

It belongs to the DNA glycosylase MPG family.

The protein is Putative 3-methyladenine DNA glycosylase of Rhodopseudomonas palustris (strain BisB18).